An 848-amino-acid chain; its full sequence is Envelope glycoprotein H (848 aa).

Positions 1–24 (MLQPYRKMLIFAVVTVAFAMAVWS) are cleaved as a signal peptide. Over 25–808 (TPVPATPSGV…ASYSSFKVPS (784 aa)) the chain is Virion surface. 7 N-linked (GlcNAc...) asparagine; by host glycosylation sites follow: asparagine 36, asparagine 41, asparagine 45, asparagine 60, asparagine 119, asparagine 182, and asparagine 210. The segment at 166–191 (NPVGVVLSPPRGSPSANTTIRDDGGP) is disordered. Residues 240–303 (DTTQVVAYLG…HAGPIYKVYV (64 aa)) are interaction with gL. Asparagine 496, asparagine 672, asparagine 766, and asparagine 789 each carry an N-linked (GlcNAc...) asparagine; by host glycan. A helical transmembrane segment spans residues 809–829 (TYLWASIGGLLLAILILYIII). Over 830–848 (KMLCGGVTNDGYKLLLSYE) the chain is Intravirion.

This sequence belongs to the herpesviridae glycoprotein H family. Interacts with glycoprotein L (gL); this interaction is necessary for the correct processing and cell surface expression of gH. The heterodimer gH/gL seems to interact with gB trimers during fusion. Post-translationally, N-glycosylated, O-glycosylated, and sialylated.

It is found in the virion membrane. The protein resides in the host cell membrane. It localises to the host endosome membrane. Its function is as follows. The heterodimer glycoprotein H-glycoprotein L is required for the fusion of viral and plasma membranes leading to virus entry into the host cell. Following initial binding to host receptor, membrane fusion is mediated by the fusion machinery composed of gB and the heterodimer gH/gL. May also be involved in the fusion between the virion envelope and the outer nuclear membrane during virion morphogenesis. In Equus caballus (Horse), this protein is Envelope glycoprotein H.